The sequence spans 316 residues: Probable inactive poly [ADP-ribose] polymerase SRO4 (316 aa).

The interval 1 to 28 (MDYSKTEETPINEEQGSTNSSESRSNEE) is disordered. A compositionally biased stretch (low complexity) spans 14-23 (EQGSTNSSES). One can recognise a PARP catalytic domain in the interval 28-255 (ELFSDCDQQH…KSPWISFPVL (228 aa)). Residues 243 to 314 (KNPKSPWISF…IKSVGQKVHK (72 aa)) form the RST domain.

The protein localises to the nucleus. In terms of biological role, probable inactive ADP-ribosyltransferase that may be involved in stress and developmental responses. The protein is Probable inactive poly [ADP-ribose] polymerase SRO4 (SRO4) of Arabidopsis thaliana (Mouse-ear cress).